Reading from the N-terminus, the 212-residue chain is NEDD4 family-interacting protein 1 (212 aa).

Residues 1–14 (MSEQSSSSRYQQLQ) show a composition bias toward polar residues. The tract at residues 1-40 (MSEQSSSSRYQQLQNEEEPGENAQASADAPPPYSSIAGES) is disordered. At 1–107 (MSEQSSSSRY…ADQLRIGNDG (107 aa)) the chain is on the cytoplasmic side. Short sequence motifs (PPxY motif) lie at residues 30–33 (PPPY) and 55–58 (PPSY). Residues 108–128 (IFMLTFFMAFLFNWIGFFLSF) traverse the membrane as a helical segment. Residues 129 to 134 (CLTSSA) are Extracellular-facing. Residues 135–155 (AGRYGAISGFGLSLIKWILIV) traverse the membrane as a helical segment. Over 156–163 (RFSTYFPG) the chain is Cytoplasmic. The chain crosses the membrane as a helical span at residues 164–184 (YFDGQYWLWWVFLVLGFLLFL). The Extracellular segment spans residues 185–212 (RGFINYAKVRKMPDNFSTLPRTRVLFIY).

It localises to the golgi apparatus membrane. Functionally, may play a role in Golgi structure maintenance. The polypeptide is NEDD4 family-interacting protein 1 (ndfip1) (Xenopus laevis (African clawed frog)).